We begin with the raw amino-acid sequence, 181 residues long: Oligoribonuclease (181 aa).

An Exonuclease domain is found at L8 to L171. Y129 is a catalytic residue.

This sequence belongs to the oligoribonuclease family.

Its subcellular location is the cytoplasm. In terms of biological role, 3'-to-5' exoribonuclease specific for small oligoribonucleotides. This chain is Oligoribonuclease, found in Shewanella sp. (strain MR-4).